Consider the following 288-residue polypeptide: Prepilin leader peptidase/N-methyltransferase (288 aa).

A helical membrane pass occupies residues phenylalanine 14 to tyrosine 34. Zn(2+) contacts are provided by cysteine 71, cysteine 74, cysteine 96, and cysteine 99. A run of 6 helical transmembrane segments spans residues isoleucine 103–tryptophan 123, alanine 127–isoleucine 147, isoleucine 158–leucine 178, valine 182–valine 202, valine 227–leucine 247, and methionine 254–tryptophan 274.

The protein belongs to the peptidase A24 family. The cofactor is Zn(2+).

It localises to the cell inner membrane. The catalysed reaction is Typically cleaves a -Gly-|-Phe- bond to release an N-terminal, basic peptide of 5-8 residues from type IV prepilin, and then N-methylates the new N-terminal amino group, the methyl donor being S-adenosyl-L-methionine.. In terms of biological role, plays an essential role in type IV pili and type II pseudopili formation by proteolytically removing the leader sequence from substrate proteins and subsequently monomethylating the alpha-amino group of the newly exposed N-terminal phenylalanine. The protein is Prepilin leader peptidase/N-methyltransferase (pilD) of Pseudomonas putida (Arthrobacter siderocapsulatus).